We begin with the raw amino-acid sequence, 393 residues long: Eukaryotic translation initiation factor 5 (393 aa).

28–35 serves as a coordination point for GTP; it reads GKGNGIKT. Disordered stretches follow at residues 144 to 179 and 217 to 247; these read KAVS…DEED and EPQS…SISS. A W2 domain is found at 223–385; the sequence is EEQDEDDEQE…ETAEEEEEDE (163 aa). A compositionally biased stretch (acidic residues) spans 224 to 233; it reads EQDEDDEQEE.

It belongs to the eIF-2-beta/eIF-5 family.

In terms of biological role, catalyzes the hydrolysis of GTP bound to the 40S ribosomal initiation complex (40S.mRNA.Met-tRNA[F].eIF-2.GTP) with the subsequent joining of a 60S ribosomal subunit resulting in the release of eIF-2 and the guanine nucleotide. The subsequent joining of a 60S ribosomal subunit results in the formation of a functional 80S initiation complex (80S.mRNA.Met-tRNA[F]). This is Eukaryotic translation initiation factor 5 (eif5) from Dictyostelium discoideum (Social amoeba).